The primary structure comprises 241 residues: Small ribosomal subunit protein uS2c (241 aa).

This sequence belongs to the universal ribosomal protein uS2 family.

The protein localises to the plastid. The protein resides in the chloroplast. This chain is Small ribosomal subunit protein uS2c (rps2), found in Porphyra purpurea (Red seaweed).